Reading from the N-terminus, the 705-residue chain is Elongation factor G (705 aa).

Positions 8-290 (HRYRNIGIMA…GVIHLLPSPA (283 aa)) constitute a tr-type G domain. Residues 17–24 (AHIDAGKT), 88–92 (DTPGH), and 142–145 (NKMD) each bind GTP.

This sequence belongs to the TRAFAC class translation factor GTPase superfamily. Classic translation factor GTPase family. EF-G/EF-2 subfamily.

It is found in the cytoplasm. Catalyzes the GTP-dependent ribosomal translocation step during translation elongation. During this step, the ribosome changes from the pre-translocational (PRE) to the post-translocational (POST) state as the newly formed A-site-bound peptidyl-tRNA and P-site-bound deacylated tRNA move to the P and E sites, respectively. Catalyzes the coordinated movement of the two tRNA molecules, the mRNA and conformational changes in the ribosome. The chain is Elongation factor G from Xylella fastidiosa (strain 9a5c).